We begin with the raw amino-acid sequence, 212 residues long: Putative 3-methyladenine DNA glycosylase (212 aa).

Belongs to the DNA glycosylase MPG family.

The sequence is that of Putative 3-methyladenine DNA glycosylase from Frankia casuarinae (strain DSM 45818 / CECT 9043 / HFP020203 / CcI3).